The chain runs to 350 residues: Protein RecA (350 aa).

68 to 75 (GPESSGKT) lines the ATP pocket.

The protein belongs to the RecA family.

It is found in the cytoplasm. Can catalyze the hydrolysis of ATP in the presence of single-stranded DNA, the ATP-dependent uptake of single-stranded DNA by duplex DNA, and the ATP-dependent hybridization of homologous single-stranded DNAs. It interacts with LexA causing its activation and leading to its autocatalytic cleavage. This Mycolicibacterium vanbaalenii (strain DSM 7251 / JCM 13017 / BCRC 16820 / KCTC 9966 / NRRL B-24157 / PYR-1) (Mycobacterium vanbaalenii) protein is Protein RecA.